The sequence spans 554 residues: Glucose-6-phosphate isomerase (554 aa).

Glu359 functions as the Proton donor in the catalytic mechanism. Catalysis depends on residues His390 and Lys518.

This sequence belongs to the GPI family.

Its subcellular location is the cytoplasm. The enzyme catalyses alpha-D-glucose 6-phosphate = beta-D-fructose 6-phosphate. It participates in carbohydrate biosynthesis; gluconeogenesis. It functions in the pathway carbohydrate degradation; glycolysis; D-glyceraldehyde 3-phosphate and glycerone phosphate from D-glucose: step 2/4. In terms of biological role, catalyzes the reversible isomerization of glucose-6-phosphate to fructose-6-phosphate. This chain is Glucose-6-phosphate isomerase, found in Pseudomonas fluorescens (strain SBW25).